Here is a 234-residue protein sequence, read N- to C-terminus: Small ribosomal subunit protein uS2 (234 aa).

Belongs to the universal ribosomal protein uS2 family.

In Prochlorococcus marinus (strain AS9601), this protein is Small ribosomal subunit protein uS2.